A 363-amino-acid polypeptide reads, in one-letter code: Small ribosomal subunit biogenesis GTPase RsgA (363 aa).

Positions 112 to 268 constitute a CP-type G domain; that stretch reads HQQVIAANID…LIDTPGMREL (157 aa). GTP-binding positions include 157–160 and 210–218; these read TKAD and GSSGAGKST. C291, C296, H298, and C304 together coordinate Zn(2+). The disordered stretch occupies residues 340-363; that stretch reads RVAQNNRGKGSGKRPASVDRPGRH.

It belongs to the TRAFAC class YlqF/YawG GTPase family. RsgA subfamily. In terms of assembly, monomer. Associates with 30S ribosomal subunit, binds 16S rRNA. Requires Zn(2+) as cofactor.

The protein resides in the cytoplasm. One of several proteins that assist in the late maturation steps of the functional core of the 30S ribosomal subunit. Helps release RbfA from mature subunits. May play a role in the assembly of ribosomal proteins into the subunit. Circularly permuted GTPase that catalyzes slow GTP hydrolysis, GTPase activity is stimulated by the 30S ribosomal subunit. This chain is Small ribosomal subunit biogenesis GTPase RsgA, found in Xanthomonas axonopodis pv. citri (strain 306).